The sequence spans 506 residues: Cytochrome P450 6a8 (506 aa).

Residue Cys-451 participates in heme binding.

The protein belongs to the cytochrome P450 family. It depends on heme as a cofactor.

The protein resides in the endoplasmic reticulum membrane. It is found in the microsome membrane. Involved in the metabolism of insect hormones and in the breakdown of synthetic insecticides. This chain is Cytochrome P450 6a8 (Cyp6a8), found in Drosophila melanogaster (Fruit fly).